Here is a 553-residue protein sequence, read N- to C-terminus: Dihydroxy-acid dehydratase (553 aa).

A Mg(2+)-binding site is contributed by Asp-78. Cys-119 is a [2Fe-2S] cluster binding site. Residues Asp-120 and Lys-121 each contribute to the Mg(2+) site. Lys-121 bears the N6-carboxylysine mark. Residue Cys-191 participates in [2Fe-2S] cluster binding. Glu-444 contacts Mg(2+). Catalysis depends on Ser-470, which acts as the Proton acceptor.

It belongs to the IlvD/Edd family. In terms of assembly, homodimer. The cofactor is [2Fe-2S] cluster. Requires Mg(2+) as cofactor.

It catalyses the reaction (2R)-2,3-dihydroxy-3-methylbutanoate = 3-methyl-2-oxobutanoate + H2O. The catalysed reaction is (2R,3R)-2,3-dihydroxy-3-methylpentanoate = (S)-3-methyl-2-oxopentanoate + H2O. Its pathway is amino-acid biosynthesis; L-isoleucine biosynthesis; L-isoleucine from 2-oxobutanoate: step 3/4. The protein operates within amino-acid biosynthesis; L-valine biosynthesis; L-valine from pyruvate: step 3/4. Its function is as follows. Functions in the biosynthesis of branched-chain amino acids. Catalyzes the dehydration of (2R,3R)-2,3-dihydroxy-3-methylpentanoate (2,3-dihydroxy-3-methylvalerate) into 2-oxo-3-methylpentanoate (2-oxo-3-methylvalerate) and of (2R)-2,3-dihydroxy-3-methylbutanoate (2,3-dihydroxyisovalerate) into 2-oxo-3-methylbutanoate (2-oxoisovalerate), the penultimate precursor to L-isoleucine and L-valine, respectively. This is Dihydroxy-acid dehydratase from Methanosarcina barkeri (strain Fusaro / DSM 804).